The sequence spans 115 residues: Succinate dehydrogenase hydrophobic membrane anchor subunit (115 aa).

The Cytoplasmic segment spans residues 1–15 (MVSNASALGRNGVHD). The chain crosses the membrane as a helical span at residues 16–36 (FILVRATAIVLTLYIIYMVGF). Over 37–58 (FATSGELTYEVWIGFFASAFTK) the chain is Periplasmic. A helical membrane pass occupies residues 59-80 (VFTLLALFSILIHAWIGMWQVL). Histidine 71 serves as a coordination point for heme. The Cytoplasmic portion of the chain corresponds to 81-90 (TDYVKPLALR). Residue tyrosine 83 participates in a ubiquinone binding. Residues 91-115 (LMLQLVIVVALVVYVIYGFVVVWGV) traverse the membrane as a helical segment.

In terms of assembly, part of an enzyme complex containing four subunits: a flavoprotein, an iron-sulfur protein, plus two membrane-anchoring proteins, SdhC and SdhD. The complex can form homotrimers. The cofactor is heme.

It localises to the cell inner membrane. The protein operates within carbohydrate metabolism; tricarboxylic acid cycle. Membrane-anchoring subunit of succinate dehydrogenase (SDH). In Escherichia coli O6:H1 (strain CFT073 / ATCC 700928 / UPEC), this protein is Succinate dehydrogenase hydrophobic membrane anchor subunit (sdhD).